The following is a 476-amino-acid chain: Aspartyl/glutamyl-tRNA(Asn/Gln) amidotransferase subunit B (476 aa).

It belongs to the GatB/GatE family. GatB subfamily. In terms of assembly, heterotrimer of A, B and C subunits.

It catalyses the reaction L-glutamyl-tRNA(Gln) + L-glutamine + ATP + H2O = L-glutaminyl-tRNA(Gln) + L-glutamate + ADP + phosphate + H(+). It carries out the reaction L-aspartyl-tRNA(Asn) + L-glutamine + ATP + H2O = L-asparaginyl-tRNA(Asn) + L-glutamate + ADP + phosphate + 2 H(+). In terms of biological role, allows the formation of correctly charged Asn-tRNA(Asn) or Gln-tRNA(Gln) through the transamidation of misacylated Asp-tRNA(Asn) or Glu-tRNA(Gln) in organisms which lack either or both of asparaginyl-tRNA or glutaminyl-tRNA synthetases. The reaction takes place in the presence of glutamine and ATP through an activated phospho-Asp-tRNA(Asn) or phospho-Glu-tRNA(Gln). The chain is Aspartyl/glutamyl-tRNA(Asn/Gln) amidotransferase subunit B from Geobacillus thermodenitrificans (strain NG80-2).